The chain runs to 443 residues: MSMDNNDDHESKLSILMDMFPAISKSKLQVHLLENNNDLDLTIGLLLKENDDKSTVDNELHQLYDMFPQLDCSVIKDQFVINEKSVESTISDLLNYETLQKLKDNQANSPDSVKRNEKKNNWESTNDHIESIIKFTDAPKNIAQEYLAENGFDTVKAIIKIILDYYDKRDFKKDVDTFKVKRSPNTTVRGGRVQSSTGLAHVLKKGKESANVAQESLKRPRSYKHSLDSPQMVELNELVADNRDLKAINHEFLQKCLQFYDGDVVKVLNISSLLIEDDKNITKTWNFDEGFTLTSRDNCKQHLPKFSTPQISRRNEVGNTYKLPLHDKETPEGAVPVINNLFQTYRLDFHGFLPSEAVSTLKLALNKWWSKEVAERELNSHNINSYGSKVQFVSPLIVVTGRGIHSIGGISKVRLQVKSFLEKNHYIFWEESSYFRIEGKKKK.

CUE domains lie at 8–51 and 55–98; these read DHES…KEND and TVDN…NYET. In terms of domain architecture, Smr spans 347-443; sequence LDFHGFLPSE…YFRIEGKKKK (97 aa).

Functionally, mRNA endonuclease involved in the No-Go Decay (NGD) pathway, which catalyzes mRNA cleavage and degradation in response to ribosome collisions. Acts downstream of the ribosome collision sensor HEL2. Specifically recognizes and binds RPS7/eS7 polyubiquitinated by MOT2/NOT4 and HEL2, promoting CUE2 recruitment to stalled ribosomes, where it mediates mRNA cleavage upstream of the colliding ribosome. Also mediates mRNA cleavage within colliding ribosomes: recruited to colliding ribosomes downstream of the RQT (ribosome quality control trigger) complex following disassembly of stalled ribosomes and cleaves mRNAs partially released from the colliding ribosome. This Saccharomyces cerevisiae (strain ATCC 204508 / S288c) (Baker's yeast) protein is Endonuclease CUE2.